Consider the following 468-residue polypeptide: ATP synthase subunit beta (468 aa).

155-162 (GGAGVGKT) serves as a coordination point for ATP.

Belongs to the ATPase alpha/beta chains family. In terms of assembly, F-type ATPases have 2 components, CF(1) - the catalytic core - and CF(0) - the membrane proton channel. CF(1) has five subunits: alpha(3), beta(3), gamma(1), delta(1), epsilon(1). CF(0) has three main subunits: a(1), b(2) and c(9-12). The alpha and beta chains form an alternating ring which encloses part of the gamma chain. CF(1) is attached to CF(0) by a central stalk formed by the gamma and epsilon chains, while a peripheral stalk is formed by the delta and b chains.

The protein localises to the cell membrane. The catalysed reaction is ATP + H2O + 4 H(+)(in) = ADP + phosphate + 5 H(+)(out). Produces ATP from ADP in the presence of a proton gradient across the membrane. The catalytic sites are hosted primarily by the beta subunits. This chain is ATP synthase subunit beta, found in Bacillus cereus (strain G9842).